The chain runs to 365 residues: Peptide chain release factor 2 (365 aa).

Glutamine 252 is subject to N5-methylglutamine.

This sequence belongs to the prokaryotic/mitochondrial release factor family. In terms of processing, methylated by PrmC. Methylation increases the termination efficiency of RF2.

It is found in the cytoplasm. Its function is as follows. Peptide chain release factor 2 directs the termination of translation in response to the peptide chain termination codons UGA and UAA. The sequence is that of Peptide chain release factor 2 from Shigella flexneri.